A 373-amino-acid chain; its full sequence is RNA cytidine acetyltransferase (373 aa).

Position 53 (arginine 53) interacts with ATP. Residues 216-218 and 223-229 each bind acetyl-CoA; these read IAT and TGMGYGS. The disordered stretch occupies residues 246–271; it reads GEFEEENEAAKPADEESDDESNLLKE. Acetyl-CoA is bound at residue arginine 313.

This sequence belongs to the RNA cytidine acetyltransferase family. NAT10 subfamily.

It localises to the nucleus. The protein resides in the nucleolus. The catalysed reaction is a cytidine in 18S rRNA + acetyl-CoA + ATP + H2O = an N(4)-acetylcytidine in 18S rRNA + ADP + phosphate + CoA + H(+). It catalyses the reaction a cytidine in tRNA + acetyl-CoA + ATP + H2O = an N(4)-acetylcytidine in tRNA + ADP + phosphate + CoA + H(+). Its function is as follows. RNA cytidine acetyltransferase with specificity toward both 18S rRNA and tRNAs. Catalyzes the formation of N(4)-acetylcytidine (ac4C) in 18S rRNA. Required for early nucleolar cleavages of precursor rRNA at sites A0, A1 and A2 during 18S rRNA synthesis. Catalyzes the formation of ac4C in serine and leucine tRNAs. Requires a tRNA-binding adapter protein for full tRNA acetyltransferase activity but not for 18S rRNA acetylation. This Achlya ambisexualis (Water mold) protein is RNA cytidine acetyltransferase.